A 120-amino-acid polypeptide reads, in one-letter code: MLTHLARTLSRQLTGLGRSSLCWFPHPGFLYRGLSALSVTPRLLVPGRAPSLQAPAPATFPQDRGSLLGQCQHLACLQPCAGMKTKSSLKRRCKNCFYVRRRGRLFVFCKTHPRHKQRQG.

Belongs to the bacterial ribosomal protein bL36 family. Component of the mitochondrial ribosome large subunit (39S) which comprises a 16S rRNA and about 50 distinct proteins.

Its subcellular location is the mitochondrion. The polypeptide is Large ribosomal subunit protein bL36m (mrpl36) (Osmerus mordax (Rainbow smelt)).